The primary structure comprises 324 residues: Beta-ketoacyl-[acyl-carrier-protein] synthase III (324 aa).

Residues Cys-114 and His-246 contribute to the active site. The segment at 247 to 251 is ACP-binding; that stretch reads QANLR. Asn-276 is an active-site residue.

The protein belongs to the thiolase-like superfamily. FabH family. As to quaternary structure, homodimer.

It is found in the cytoplasm. It carries out the reaction malonyl-[ACP] + acetyl-CoA + H(+) = 3-oxobutanoyl-[ACP] + CO2 + CoA. It functions in the pathway lipid metabolism; fatty acid biosynthesis. In terms of biological role, catalyzes the condensation reaction of fatty acid synthesis by the addition to an acyl acceptor of two carbons from malonyl-ACP. Catalyzes the first condensation reaction which initiates fatty acid synthesis and may therefore play a role in governing the total rate of fatty acid production. Possesses both acetoacetyl-ACP synthase and acetyl transacylase activities. Its substrate specificity determines the biosynthesis of branched-chain and/or straight-chain of fatty acids. The protein is Beta-ketoacyl-[acyl-carrier-protein] synthase III of Campylobacter jejuni subsp. jejuni serotype O:6 (strain 81116 / NCTC 11828).